The following is a 456-amino-acid chain: Taurine--pyruvate aminotransferase (456 aa).

N6-(pyridoxal phosphate)lysine is present on Lys-280.

Belongs to the class-III pyridoxal-phosphate-dependent aminotransferase family. Homotetramer. It depends on pyridoxal 5'-phosphate as a cofactor.

It catalyses the reaction taurine + pyruvate = sulfoacetaldehyde + L-alanine. Its pathway is organosulfur degradation; alkanesulfonate degradation. In terms of biological role, involved in an anaerobic respiration pathway that converts the sulfonate taurine (2-aminoethanesulfonate) to ammonia, acetate and sulfide. Catalyzes the initial metabolic reaction of anaerobic taurine degradation, i.e. the transamination reaction between taurine and pyruvate leading to sulfoacetaldehyde and alanine. The chain is Taurine--pyruvate aminotransferase from Bilophila wadsworthia (strain 3_1_6).